The primary structure comprises 263 residues: Methylesterase 4 (263 aa).

Ser84 functions as the Acyl-ester intermediate in the catalytic mechanism. Active-site charge relay system residues include Asp213 and His241.

It belongs to the AB hydrolase superfamily. Methylesterase family.

The catalysed reaction is methyl salicylate + H2O = salicylate + methanol + H(+). Its pathway is plant hormone biosynthesis. With respect to regulation, esterase activity is down-regulated by salicylic acid (SA). Its function is as follows. Methylesterase shown to have carboxylesterase activity and methyl salicylate (MeSA) esterase activity in vitro. The chain is Methylesterase 4 from Arabidopsis thaliana (Mouse-ear cress).